The following is a 357-amino-acid chain: Histidine biosynthesis bifunctional protein HisB (357 aa).

The tract at residues 1 to 167 (MNDKILFIDR…IHKYLMQNSH (167 aa)) is histidinol-phosphatase. The Nucleophile role is filled by Asp9. Residues Asp9 and Asp11 each coordinate Mg(2+). Catalysis depends on Asp11, which acts as the Proton donor. Positions 93, 95, 101, and 103 each coordinate Zn(2+). Asp130 is a Mg(2+) binding site. Residues 168-357 (RVAHIQRITN…QIPSSKGILL (190 aa)) are imidazoleglycerol-phosphate dehydratase.

It in the N-terminal section; belongs to the histidinol-phosphatase family. The protein in the C-terminal section; belongs to the imidazoleglycerol-phosphate dehydratase family. It depends on Mg(2+) as a cofactor. The cofactor is Zn(2+).

The protein localises to the cytoplasm. The catalysed reaction is D-erythro-1-(imidazol-4-yl)glycerol 3-phosphate = 3-(imidazol-4-yl)-2-oxopropyl phosphate + H2O. The enzyme catalyses L-histidinol phosphate + H2O = L-histidinol + phosphate. It participates in amino-acid biosynthesis; L-histidine biosynthesis; L-histidine from 5-phospho-alpha-D-ribose 1-diphosphate: step 6/9. Its pathway is amino-acid biosynthesis; L-histidine biosynthesis; L-histidine from 5-phospho-alpha-D-ribose 1-diphosphate: step 8/9. The protein is Histidine biosynthesis bifunctional protein HisB of Blochmanniella floridana.